A 288-amino-acid chain; its full sequence is 2-hydroxy-6-oxononadienedioate/2-hydroxy-6-oxononatrienedioate hydrolase (288 aa).

An AB hydrolase-1 domain is found at 38-274; sequence ALVLLHGSGP…RCGHWAQWEH (237 aa). The active-site Proton acceptor is histidine 268.

The protein belongs to the AB hydrolase superfamily. MhpC family. Homodimer.

It catalyses the reaction (2Z,4E)-2-hydroxy-6-oxonona-2,4-dienedioate + H2O = (2Z)-2-hydroxypenta-2,4-dienoate + succinate + H(+). The catalysed reaction is (2Z,4E,7E)-2-hydroxy-6-oxonona-2,4,7-trienedioate + H2O = (2Z)-2-hydroxypenta-2,4-dienoate + fumarate + H(+). It participates in aromatic compound metabolism; 3-phenylpropanoate degradation. In terms of biological role, catalyzes the cleavage of the C5-C6 bond of 2-hydroxy-6-oxononadienedioate and 2-hydroxy-6-oxononatrienedioate, a dienol ring fission product of the bacterial meta-cleavage pathway for degradation of phenylpropionic acid. The protein is 2-hydroxy-6-oxononadienedioate/2-hydroxy-6-oxononatrienedioate hydrolase of Burkholderia vietnamiensis (strain G4 / LMG 22486) (Burkholderia cepacia (strain R1808)).